Consider the following 261-residue polypeptide: Glucose 1-dehydrogenase 1 (261 aa).

11–35 is an NADP(+) binding site; the sequence is VITGSSTGLGKAMAIRFATEKAKVV. Residue Ser-145 participates in substrate binding. Tyr-158 functions as the Proton acceptor in the catalytic mechanism.

The protein belongs to the short-chain dehydrogenases/reductases (SDR) family. Homotetramer.

The enzyme catalyses D-glucose + NAD(+) = D-glucono-1,5-lactone + NADH + H(+). The catalysed reaction is D-glucose + NADP(+) = D-glucono-1,5-lactone + NADPH + H(+). May play some role in spore germination. The protein is Glucose 1-dehydrogenase 1 (gdhI) of Priestia megaterium (Bacillus megaterium).